A 1404-amino-acid chain; its full sequence is DNA-directed RNA polymerase subunit beta' (1404 aa).

Zn(2+) is bound by residues C70, C72, C85, and C88. Mg(2+) contacts are provided by D460, D462, and D464. 4 residues coordinate Zn(2+): C814, C888, C895, and C898.

Belongs to the RNA polymerase beta' chain family. As to quaternary structure, the RNAP catalytic core consists of 2 alpha, 1 beta, 1 beta' and 1 omega subunit. When a sigma factor is associated with the core the holoenzyme is formed, which can initiate transcription. Mg(2+) serves as cofactor. The cofactor is Zn(2+).

The catalysed reaction is RNA(n) + a ribonucleoside 5'-triphosphate = RNA(n+1) + diphosphate. DNA-dependent RNA polymerase catalyzes the transcription of DNA into RNA using the four ribonucleoside triphosphates as substrates. In Shewanella halifaxensis (strain HAW-EB4), this protein is DNA-directed RNA polymerase subunit beta'.